A 540-amino-acid chain; its full sequence is Chaperonin GroEL (540 aa).

Residues 29 to 32 (TLGP), 86 to 90 (DGTTT), glycine 413, 476 to 478 (NAA), and aspartate 492 each bind ATP.

This sequence belongs to the chaperonin (HSP60) family. In terms of assembly, forms a cylinder of 14 subunits composed of two heptameric rings stacked back-to-back. Interacts with the co-chaperonin GroES.

Its subcellular location is the cytoplasm. The enzyme catalyses ATP + H2O + a folded polypeptide = ADP + phosphate + an unfolded polypeptide.. Together with its co-chaperonin GroES, plays an essential role in assisting protein folding. The GroEL-GroES system forms a nano-cage that allows encapsulation of the non-native substrate proteins and provides a physical environment optimized to promote and accelerate protein folding. The sequence is that of Chaperonin GroEL from Streptococcus pneumoniae (strain Hungary19A-6).